The following is a 343-amino-acid chain: Holliday junction branch migration complex subunit RuvB (343 aa).

The segment at 1–26 is disordered; sequence MKEKILTFSSDPSSPVTRHETEEDTG. The interval 3-193 is large ATPase domain (RuvB-L); it reads EKILTFSSDP…FGIFRKFDFY (191 aa). Polar residues predominate over residues 7–16; the sequence is TFSSDPSSPV. ATP-binding positions include Leu32, Arg33, Gly74, Lys77, Thr78, Thr79, 140–142, Arg183, Tyr193, and Arg230; that span reads EDF. Mg(2+) is bound at residue Thr78. A small ATPAse domain (RuvB-S) region spans residues 194–264; the sequence is SRQDLARIVS…AIDDALALEG (71 aa). The interval 267–343 is head domain (RuvB-H); sequence EKGLTGLDRS…YRHLGVQWRG (77 aa). 2 residues coordinate DNA: Arg322 and Arg327.

This sequence belongs to the RuvB family. Homohexamer. Forms an RuvA(8)-RuvB(12)-Holliday junction (HJ) complex. HJ DNA is sandwiched between 2 RuvA tetramers; dsDNA enters through RuvA and exits via RuvB. An RuvB hexamer assembles on each DNA strand where it exits the tetramer. Each RuvB hexamer is contacted by two RuvA subunits (via domain III) on 2 adjacent RuvB subunits; this complex drives branch migration. In the full resolvosome a probable DNA-RuvA(4)-RuvB(12)-RuvC(2) complex forms which resolves the HJ.

Its subcellular location is the cytoplasm. The catalysed reaction is ATP + H2O = ADP + phosphate + H(+). Its function is as follows. The RuvA-RuvB-RuvC complex processes Holliday junction (HJ) DNA during genetic recombination and DNA repair, while the RuvA-RuvB complex plays an important role in the rescue of blocked DNA replication forks via replication fork reversal (RFR). RuvA specifically binds to HJ cruciform DNA, conferring on it an open structure. The RuvB hexamer acts as an ATP-dependent pump, pulling dsDNA into and through the RuvAB complex. RuvB forms 2 homohexamers on either side of HJ DNA bound by 1 or 2 RuvA tetramers; 4 subunits per hexamer contact DNA at a time. Coordinated motions by a converter formed by DNA-disengaged RuvB subunits stimulates ATP hydrolysis and nucleotide exchange. Immobilization of the converter enables RuvB to convert the ATP-contained energy into a lever motion, pulling 2 nucleotides of DNA out of the RuvA tetramer per ATP hydrolyzed, thus driving DNA branch migration. The RuvB motors rotate together with the DNA substrate, which together with the progressing nucleotide cycle form the mechanistic basis for DNA recombination by continuous HJ branch migration. Branch migration allows RuvC to scan DNA until it finds its consensus sequence, where it cleaves and resolves cruciform DNA. The sequence is that of Holliday junction branch migration complex subunit RuvB from Desulfosudis oleivorans (strain DSM 6200 / JCM 39069 / Hxd3) (Desulfococcus oleovorans).